Reading from the N-terminus, the 135-residue chain is Fatty acid-binding protein 5 (135 aa).

The residue at position 2 (Ala2) is an N-acetylalanine. The residue at position 17 (Lys17) is an N6-acetyllysine. The residue at position 22 (Tyr22) is a Phosphotyrosine; by Tyr-kinases. Residues 24–34 (KEVGVGMALRK) carry the Nuclear localization signal motif. Cys43 and Arg109 together coordinate N-eicosanoyl ethanolamine. Residues Cys120 and Cys127 are joined by a disulfide bond. 129–131 (RVY) provides a ligand contact to (9Z,12Z)-octadecadienoate. An N-eicosanoyl ethanolamine-binding site is contributed by Tyr131. Position 131 (Tyr131) interacts with hexadecanoate. Tyr131 carries the phosphotyrosine modification.

It belongs to the calycin superfamily. Fatty-acid binding protein (FABP) family. Monomer. Most abundant in lens and retina (found in the mueller cells), moderately abundant in heart and testis (found in the Sertoli cells), and present in very low amounts in lung.

It localises to the cytoplasm. The protein localises to the nucleus. The protein resides in the synapse. It is found in the postsynaptic density. Its subcellular location is the secreted. It carries out the reaction hexadecanoate(out) = hexadecanoate(in). The enzyme catalyses (9Z,12Z)-octadecadienoate(out) = (9Z,12Z)-octadecadienoate(in). The catalysed reaction is (9Z)-octadecenoate(out) = (9Z)-octadecenoate(in). In terms of biological role, intracellular carrier for long-chain fatty acids and related active lipids, such as endocannabinoids, that regulate the metabolism and actions of the ligands they bind. In addition to the cytosolic transport, selectively delivers specific fatty acids from the cytosol to the nucleus, wherein they activate nuclear receptors. Delivers retinoic acid to the nuclear receptor peroxisome proliferator-activated receptor delta; which promotes proliferation and survival. May also serve as a synaptic carrier of endocannabinoid at central synapses and thus controls retrograde endocannabinoid signaling. Modulates inflammation by regulating PTGES induction via NF-kappa-B activation, and prostaglandin E2 (PGE2) biosynthesis during inflammation. This chain is Fatty acid-binding protein 5 (FABP5), found in Bos taurus (Bovine).